The chain runs to 284 residues: 4-diphosphocytidyl-2-C-methyl-D-erythritol kinase (284 aa).

Residue lysine 9 is part of the active site. Residue 92-102 (PMGGGIGGGSS) coordinates ATP. Aspartate 134 is an active-site residue.

It belongs to the GHMP kinase family. IspE subfamily.

The catalysed reaction is 4-CDP-2-C-methyl-D-erythritol + ATP = 4-CDP-2-C-methyl-D-erythritol 2-phosphate + ADP + H(+). Its pathway is isoprenoid biosynthesis; isopentenyl diphosphate biosynthesis via DXP pathway; isopentenyl diphosphate from 1-deoxy-D-xylulose 5-phosphate: step 3/6. Its function is as follows. Catalyzes the phosphorylation of the position 2 hydroxy group of 4-diphosphocytidyl-2C-methyl-D-erythritol. The protein is 4-diphosphocytidyl-2-C-methyl-D-erythritol kinase of Stutzerimonas stutzeri (strain A1501) (Pseudomonas stutzeri).